Here is a 615-residue protein sequence, read N- to C-terminus: DNA mismatch repair protein MutL (615 aa).

The protein belongs to the DNA mismatch repair MutL/HexB family.

Its function is as follows. This protein is involved in the repair of mismatches in DNA. It is required for dam-dependent methyl-directed DNA mismatch repair. May act as a 'molecular matchmaker', a protein that promotes the formation of a stable complex between two or more DNA-binding proteins in an ATP-dependent manner without itself being part of a final effector complex. This Parabacteroides distasonis (strain ATCC 8503 / DSM 20701 / CIP 104284 / JCM 5825 / NCTC 11152) protein is DNA mismatch repair protein MutL.